Consider the following 946-residue polypeptide: Atos homolog protein A (946 aa).

The transactivation domain 1 (TAD1) stretch occupies residues 24–32 (ALLITEGRT). Residues 34 to 43 (EHSVKGRTEG) are compositionally biased toward basic and acidic residues. Disordered regions lie at residues 34–58 (EHSV…APNK), 246–271 (SVTQ…FTKP), 484–524 (FQSS…TGNQ), and 547–567 (SCTD…SQKV). 2 stretches are compositionally biased toward polar residues: residues 247–267 (VTQP…SQHA) and 484–500 (FQSS…NENI). 2 stretches are compositionally biased toward basic and acidic residues: residues 503–517 (LPEK…HGEI) and 547–560 (SCTD…KDNP). The interval 749–806 (LLGNFEESVLNYRFEPLGVVEGFTAEVGASGIFCPTHMTLPVKVSFYSVSDDNAPSPY) is required for macropage invasion. Residues 833 to 841 (FNPNKTVVK) are transactivation domain 2 (TAD2).

This sequence belongs to the ATOS family.

The protein localises to the nucleus. Transcription regulator that syncronizes transcriptional and translational programs to promote macrophage invasion of tissues. The protein is Atos homolog protein A (atosa) of Xenopus tropicalis (Western clawed frog).